The primary structure comprises 159 residues: Major allergen Mal d 1 (159 aa).

This sequence belongs to the BetVI family.

The protein is Major allergen Mal d 1 of Malus domestica (Apple).